The following is a 911-amino-acid chain: Bifunctional aspartokinase/homoserine dehydrogenase 1, chloroplastic (911 aa).

A chloroplast-targeting transit peptide spans 1–82 (MPVVSLAKVV…VENGHLPKGD (82 aa)). The aspartokinase stretch occupies residues 83–331 (SWAVHKFGGT…VSEAVVLKTL (249 aa)). The interval 332 to 557 (SYQEAWEMSY…LSRTTLAVGI (226 aa)) is interface. ACT domains lie at 407–482 (VEGT…IIPN) and 488–565 (AVGQ…LIGG). The tract at residues 558-911 (IGPGLIGGTL…RLAFYLGAPS (354 aa)) is homoserine dehydrogenase. I563 and T644 together coordinate NAD(+). Positions 563, 644, and 668 each coordinate NADP(+). I563, T644, and K668 together coordinate NADPH. Na(+)-binding residues include E695, V698, A700, and L702. NADP(+)-binding residues include G753 and E756. Residues E756 and D767 each coordinate L-homoserine. The Proton donor role is filled by K771. Residue G888 coordinates NAD(+). G888 lines the NADP(+) pocket. G888 lines the NADPH pocket.

The protein in the N-terminal section; belongs to the aspartokinase family. It in the C-terminal section; belongs to the homoserine dehydrogenase family. In terms of assembly, homo- or heterodimer. A metal cation is required as a cofactor.

Its subcellular location is the plastid. The protein resides in the chloroplast. The enzyme catalyses L-homoserine + NADP(+) = L-aspartate 4-semialdehyde + NADPH + H(+). It carries out the reaction L-homoserine + NAD(+) = L-aspartate 4-semialdehyde + NADH + H(+). The catalysed reaction is L-aspartate + ATP = 4-phospho-L-aspartate + ADP. Its pathway is amino-acid biosynthesis; L-lysine biosynthesis via DAP pathway; (S)-tetrahydrodipicolinate from L-aspartate: step 1/4. The protein operates within amino-acid biosynthesis; L-methionine biosynthesis via de novo pathway; L-homoserine from L-aspartate: step 1/3. It functions in the pathway amino-acid biosynthesis; L-methionine biosynthesis via de novo pathway; L-homoserine from L-aspartate: step 3/3. It participates in amino-acid biosynthesis; L-threonine biosynthesis; L-threonine from L-aspartate: step 1/5. Its pathway is amino-acid biosynthesis; L-threonine biosynthesis; L-threonine from L-aspartate: step 3/5. With respect to regulation, inhibition of aspartate kinase activity by threonine and leucine and 3-fold activation by cysteine, isoleucine, valine, serine and alanine at 2.5 mM. Partial inhibition of homoserine dehydrogenase activity by threonine and cysteine (14% of activity remaining at saturation with either amino acid). No synergy between the effectors for both activation or inhibition. In terms of biological role, bifunctional aspartate kinase and homoserine dehydrogenase that catalyzes the first and the third steps toward the synthesis of lysine, methionine and threonine from aspartate. This chain is Bifunctional aspartokinase/homoserine dehydrogenase 1, chloroplastic, found in Arabidopsis thaliana (Mouse-ear cress).